A 235-amino-acid polypeptide reads, in one-letter code: Putative cobalt transport protein CbiM 2 (235 aa).

7 consecutive transmembrane segments (helical) span residues 8–28 (LPAI…AYGV), 40–60 (GILP…SLKM), 74–94 (GIGA…IVLI), 107–127 (TLGA…YLIY), 135–155 (LNFY…TYIV), 160–180 (LALA…SSFS), and 185–205 (IFAI…ALLF).

It belongs to the CbiM family. In terms of assembly, forms an energy-coupling factor (ECF) transporter complex composed of an ATP-binding protein (A component, CbiO), a transmembrane protein (T component, CbiQ) and 2 possible substrate-capture proteins (S components, CbiM and CbiN) of unknown stoichimetry.

It localises to the cell membrane. Its pathway is cofactor biosynthesis; adenosylcobalamin biosynthesis. In terms of biological role, part of the energy-coupling factor (ECF) transporter complex CbiMNOQ involved in cobalt import. The sequence is that of Putative cobalt transport protein CbiM 2 from Methanosarcina barkeri (strain Fusaro / DSM 804).